We begin with the raw amino-acid sequence, 118 residues long: NADH-ubiquinone oxidoreductase chain 3 (118 aa).

Helical transmembrane passes span 9–29 (IYLVISLLVSLILLGVPFLFA), 62–82 (LVSILFIIFDLEVTFFFPWAV), and 87–107 (IDLFGFWSMMAFLLILFIGSL).

Belongs to the complex I subunit 3 family.

It localises to the mitochondrion membrane. It catalyses the reaction a ubiquinone + NADH + 5 H(+)(in) = a ubiquinol + NAD(+) + 4 H(+)(out). In terms of biological role, core subunit of the mitochondrial membrane respiratory chain NADH dehydrogenase (Complex I) that is believed to belong to the minimal assembly required for catalysis. Complex I functions in the transfer of electrons from NADH to the respiratory chain. The immediate electron acceptor for the enzyme is believed to be ubiquinone. In Zea mays (Maize), this protein is NADH-ubiquinone oxidoreductase chain 3 (ND3).